The sequence spans 152 residues: Neuromedin-S (152 aa).

Positions 1 to 26 are cleaved as a signal peptide; it reads MKHPFPQFPPILVIYCFCMLQIPSSG. 3 propeptides span residues 27 to 69, 70 to 105, and 106 to 108; these read ASPP…VYKR, FLFH…PSRR, and MKR. The residue at position 144 (N144) is an Asparagine amide. The propeptide occupies 147–152; sequence YTDKVQ.

Belongs to the NmU family. In terms of tissue distribution, expressed in the CNS, spleen and testis. Specifically expressed in the suprachiasmatic nuclei (SCN) of the hypothalamus.

It localises to the secreted. Implicated in the regulation of circadian rhythms through autocrine and/or paracrine actions. Stimulates the contraction of rectum and elevation of blood pressure. The protein is Neuromedin-S (Nms) of Rattus norvegicus (Rat).